Consider the following 313-residue polypeptide: Pyrimidine-specific ribonucleoside hydrolase RihB (313 aa).

D11 serves as the catalytic Proton acceptor. Residues D11, D16, and V124 each coordinate Ca(2+). Substrate contacts are provided by Q227 and H239. D240 is a Ca(2+) binding site.

It belongs to the IUNH family. RihB subfamily. As to quaternary structure, homotetramer. Requires Ca(2+) as cofactor.

The catalysed reaction is a pyrimidine ribonucleoside + H2O = a pyrimidine nucleobase + D-ribose. Functionally, hydrolyzes cytidine or uridine to ribose and cytosine or uracil, respectively. Has a clear preference for cytidine over uridine. Strictly specific for ribonucleosides. This Escherichia coli (strain SE11) protein is Pyrimidine-specific ribonucleoside hydrolase RihB.